A 618-amino-acid chain; its full sequence is Serine/threonine-protein kinase pkn1 (618 aa).

The 367-residue stretch at 15–381 folds into the Protein kinase domain; that stretch reads YKILCYLRKG…KEEVKPQPLF (367 aa). ATP-binding positions include 21-29 and K44; that span reads LRKGLWCQD.

Belongs to the protein kinase superfamily. Ser/Thr protein kinase family. Autophosphorylated on serine and threonine residues.

The enzyme catalyses L-seryl-[protein] + ATP = O-phospho-L-seryl-[protein] + ADP + H(+). It carries out the reaction L-threonyl-[protein] + ATP = O-phospho-L-threonyl-[protein] + ADP + H(+). Functionally, together with the serine/threonine kinase PknD, may play a role in the specific interactions with host proteins during intracellular growth. This is Serine/threonine-protein kinase pkn1 (pkn1) from Chlamydia caviae (strain ATCC VR-813 / DSM 19441 / 03DC25 / GPIC) (Chlamydophila caviae).